Consider the following 94-residue polypeptide: Acylphosphatase (94 aa).

Residues 5–94 (RLTAFVHGHV…PRDVEGFVER (90 aa)) enclose the Acylphosphatase-like domain. Active-site residues include Arg20 and Asn38.

The protein belongs to the acylphosphatase family.

It carries out the reaction an acyl phosphate + H2O = a carboxylate + phosphate + H(+). This is Acylphosphatase (acyP) from Corynebacterium glutamicum (strain ATCC 13032 / DSM 20300 / JCM 1318 / BCRC 11384 / CCUG 27702 / LMG 3730 / NBRC 12168 / NCIMB 10025 / NRRL B-2784 / 534).